A 364-amino-acid chain; its full sequence is Chorismate synthase (364 aa).

The tract at residues 41–60 (MQHDLDRRRPGTSRYTTARR) is disordered. Positions 48 and 54 each coordinate NADP(+). Residues 125-127 (RSS), 238-239 (NA), glycine 278, 293-297 (KPTSS), and arginine 319 each bind FMN.

The protein belongs to the chorismate synthase family. As to quaternary structure, homotetramer. The cofactor is FMNH2.

It carries out the reaction 5-O-(1-carboxyvinyl)-3-phosphoshikimate = chorismate + phosphate. The protein operates within metabolic intermediate biosynthesis; chorismate biosynthesis; chorismate from D-erythrose 4-phosphate and phosphoenolpyruvate: step 7/7. Catalyzes the anti-1,4-elimination of the C-3 phosphate and the C-6 proR hydrogen from 5-enolpyruvylshikimate-3-phosphate (EPSP) to yield chorismate, which is the branch point compound that serves as the starting substrate for the three terminal pathways of aromatic amino acid biosynthesis. This reaction introduces a second double bond into the aromatic ring system. In Shewanella sp. (strain MR-4), this protein is Chorismate synthase.